A 140-amino-acid chain; its full sequence is ATP synthase epsilon chain (140 aa).

The protein belongs to the ATPase epsilon chain family. F-type ATPases have 2 components, CF(1) - the catalytic core - and CF(0) - the membrane proton channel. CF(1) has five subunits: alpha(3), beta(3), gamma(1), delta(1), epsilon(1). CF(0) has three main subunits: a, b and c.

Its subcellular location is the cell inner membrane. Functionally, produces ATP from ADP in the presence of a proton gradient across the membrane. This chain is ATP synthase epsilon chain, found in Yersinia enterocolitica serotype O:8 / biotype 1B (strain NCTC 13174 / 8081).